Here is a 507-residue protein sequence, read N- to C-terminus: DNA nucleotidylexotransferase (507 aa).

The Nuclear localization signal motif lies at 11–17; sequence PLRKKAK. The BRCT domain maps to 27–124; the sequence is QHNVKFKEIV…RPVEIQNRHL (98 aa). An involved in DNA binding region spans residues 254–258; sequence VGLKT. A 2'-deoxyribonucleoside 5'-triphosphate-binding positions include 329-334 and 338-341; these read GFRRGK and HDVD. Asp339, Asp341, and Asp431 together coordinate Mg(2+). 446–447 lines the a 2'-deoxyribonucleoside 5'-triphosphate pocket; sequence GW.

This sequence belongs to the DNA polymerase type-X family. The cofactor is Mg(2+). In terms of tissue distribution, found in the thymus and not in the spleen, kidney, intestine, or liver.

It localises to the nucleus. It catalyses the reaction DNA(n) + a 2'-deoxyribonucleoside 5'-triphosphate = DNA(n+1) + diphosphate. Functionally, template-independent DNA polymerase which catalyzes the random addition of deoxynucleoside 5'-triphosphate to the 3'-end of a DNA initiator. One of the in vivo functions of this enzyme is the addition of nucleotides at the junction (N region) of rearranged Ig heavy chain and T-cell receptor gene segments during the maturation of B- and T-cells. This Xenopus laevis (African clawed frog) protein is DNA nucleotidylexotransferase (dntt).